The sequence spans 373 residues: Trifolitoxin-processing protein TfxB (373 aa).

This sequence to E.coli McbC which is involved in the processing of microcin B17 (MCCB17).

It localises to the cytoplasm. Its function is as follows. The actions of the proteins TfxB, TfxD and TfxF are implicated in the processing of the inactive trifolitoxin (TfxA) precursor into the active peptide. The chain is Trifolitoxin-processing protein TfxB (tfxB) from Rhizobium leguminosarum bv. trifolii.